Consider the following 208-residue polypeptide: Holliday junction branch migration complex subunit RuvA (208 aa).

Residues 1–69 (MIGFLQGYVV…EDQMVLFGFA (69 aa)) are domain I. A domain II region spans residues 70 to 148 (VVAERDLFRQ…EWRDQAGLKT (79 aa)). The interval 149-159 (LPSAGPIDSVQ) is flexible linker. Residues 159–208 (QEDVEMTLLALGYTSQEVMRALQAVGQNTALAKNSDTEAWIREAIAWLSQ) form a domain III region.

This sequence belongs to the RuvA family. Homotetramer. Forms an RuvA(8)-RuvB(12)-Holliday junction (HJ) complex. HJ DNA is sandwiched between 2 RuvA tetramers; dsDNA enters through RuvA and exits via RuvB. An RuvB hexamer assembles on each DNA strand where it exits the tetramer. Each RuvB hexamer is contacted by two RuvA subunits (via domain III) on 2 adjacent RuvB subunits; this complex drives branch migration. In the full resolvosome a probable DNA-RuvA(4)-RuvB(12)-RuvC(2) complex forms which resolves the HJ.

It is found in the cytoplasm. Its function is as follows. The RuvA-RuvB-RuvC complex processes Holliday junction (HJ) DNA during genetic recombination and DNA repair, while the RuvA-RuvB complex plays an important role in the rescue of blocked DNA replication forks via replication fork reversal (RFR). RuvA specifically binds to HJ cruciform DNA, conferring on it an open structure. The RuvB hexamer acts as an ATP-dependent pump, pulling dsDNA into and through the RuvAB complex. HJ branch migration allows RuvC to scan DNA until it finds its consensus sequence, where it cleaves and resolves the cruciform DNA. This chain is Holliday junction branch migration complex subunit RuvA, found in Acaryochloris marina (strain MBIC 11017).